The sequence spans 114 residues: Flagellar transcriptional regulator FlhD (114 aa).

It belongs to the FlhD family. As to quaternary structure, homodimer; disulfide-linked. Forms a heterohexamer composed of two FlhC and four FlhD subunits. Each FlhC binds a FlhD dimer, forming a heterotrimer, and a hexamer assembles by dimerization of two heterotrimers.

It localises to the cytoplasm. Functions in complex with FlhC as a master transcriptional regulator that regulates transcription of several flagellar and non-flagellar operons by binding to their promoter region. Activates expression of class 2 flagellar genes, including fliA, which is a flagellum-specific sigma factor that turns on the class 3 genes. Also regulates genes whose products function in a variety of physiological pathways. This is Flagellar transcriptional regulator FlhD from Wigglesworthia glossinidia brevipalpis.